The sequence spans 268 residues: Tryptophan synthase alpha chain (268 aa).

Catalysis depends on proton acceptor residues glutamate 49 and aspartate 60.

It belongs to the TrpA family. In terms of assembly, tetramer of two alpha and two beta chains.

The catalysed reaction is (1S,2R)-1-C-(indol-3-yl)glycerol 3-phosphate + L-serine = D-glyceraldehyde 3-phosphate + L-tryptophan + H2O. The protein operates within amino-acid biosynthesis; L-tryptophan biosynthesis; L-tryptophan from chorismate: step 5/5. In terms of biological role, the alpha subunit is responsible for the aldol cleavage of indoleglycerol phosphate to indole and glyceraldehyde 3-phosphate. The sequence is that of Tryptophan synthase alpha chain from Photorhabdus laumondii subsp. laumondii (strain DSM 15139 / CIP 105565 / TT01) (Photorhabdus luminescens subsp. laumondii).